Consider the following 490-residue polypeptide: Cytochrome P450 2C6 (490 aa).

N6-acetyllysine occurs at positions 249 and 375. C435 contributes to the heme binding site.

It belongs to the cytochrome P450 family. Heme serves as cofactor.

Its subcellular location is the endoplasmic reticulum membrane. The protein resides in the microsome membrane. It carries out the reaction an organic molecule + reduced [NADPH--hemoprotein reductase] + O2 = an alcohol + oxidized [NADPH--hemoprotein reductase] + H2O + H(+). Cytochromes P450 are a group of heme-thiolate monooxygenases. In liver microsomes, this enzyme is involved in an NADPH-dependent electron transport pathway. It oxidizes a variety of structurally unrelated compounds, including steroids, fatty acids, and xenobiotics. This chain is Cytochrome P450 2C6 (Cyp2c6), found in Rattus norvegicus (Rat).